The primary structure comprises 245 residues: Flavin mononucleotide hydrolase 1, chloroplatic (245 aa).

Residues 1 to 26 (MAAAAMHTSAEFINLKPNMWKKNPVR) constitute a chloroplast transit peptide.

Belongs to the HAD-like hydrolase superfamily. DOG/GPP family. In terms of assembly, homodimer. The cofactor is Mg(2+).

The protein localises to the plastid. It localises to the chloroplast stroma. It catalyses the reaction FMN + H2O = riboflavin + phosphate. It carries out the reaction 5-amino-6-(5-phospho-D-ribitylamino)uracil + H2O = 5-amino-6-(D-ribitylamino)uracil + phosphate. Its function is as follows. FMN hydrolase that catalyzes the dephosphorylation of flavin mononucleotide (FMN) to riboflavin. Can also dephosphorylate 5-amino-6-(5-phospho-D-ribitylamino)uracil, also known as ARPP. Not required for riboflavin biosynthesis in planta, but may help maintaining flavin homeostasis within chloroplasts. This is Flavin mononucleotide hydrolase 1, chloroplatic from Arabidopsis thaliana (Mouse-ear cress).